The primary structure comprises 342 residues: ATPase asna-1 (342 aa).

ATP is bound at residue 26-33; the sequence is KGGVGKTT. The active site involves aspartate 55. Positions 243 and 270 each coordinate ATP. The Zn(2+) site is built by cysteine 285 and cysteine 288.

The protein belongs to the arsA ATPase family. In terms of assembly, homodimer.

It localises to the cytoplasm. Its subcellular location is the endoplasmic reticulum. Its function is as follows. ATPase required for the post-translational delivery of tail-anchored (TA) proteins to the endoplasmic reticulum. Recognizes and selectively binds the transmembrane domain of TA proteins in the cytosol. This complex then targets to the endoplasmic reticulum by membrane-bound receptors, where the tail-anchored protein is released for insertion. This process is regulated by ATP binding and hydrolysis. ATP binding drives the homodimer towards the closed dimer state, facilitating recognition of newly synthesized TA membrane proteins. ATP hydrolysis is required for insertion. Subsequently, the homodimer reverts towards the open dimer state, lowering its affinity for the membrane-bound receptor, and returning it to the cytosol to initiate a new round of targeting. May be involved in insulin signaling. In Caenorhabditis elegans, this protein is ATPase asna-1.